The sequence spans 156 residues: Small ribosomal subunit protein uS7 (156 aa).

This sequence belongs to the universal ribosomal protein uS7 family. Part of the 30S ribosomal subunit. Contacts proteins S9 and S11.

One of the primary rRNA binding proteins, it binds directly to 16S rRNA where it nucleates assembly of the head domain of the 30S subunit. Is located at the subunit interface close to the decoding center, probably blocks exit of the E-site tRNA. The protein is Small ribosomal subunit protein uS7 of Vibrio parahaemolyticus serotype O3:K6 (strain RIMD 2210633).